The chain runs to 332 residues: Homeobox protein DLX-2 (332 aa).

The span at 19–28 (ASSTYHQHQQ) shows a compositional bias: polar residues. The disordered stretch occupies residues 19–83 (ASSTYHQHQQ…QHPAGGGGGG (65 aa)). Residues 40-49 (NSNSSSSNSS) are compositionally biased toward low complexity. Residues 55–75 (ESPTLPVSTATDSSYYTNQQH) are compositionally biased toward polar residues. A DNA-binding region (homeobox) is located at residues 155–214 (VRKPRTIYSSFQLAALQRRFQKTQYLALPERAELAASLGLTQTQVKIWFQNRRSKFKKMW). Disordered stretches follow at residues 219-272 (IPTE…SSPS) and 304-332 (PSQTPQAHHHHHHHHHAGGGAPVSAGTIF). The residue at position 235 (S235) is a Phosphoserine. The segment covering 253 to 266 (AGGGPGSGGGGAGS) has biased composition (gly residues). Positions 310–320 (AHHHHHHHHHA) are enriched in basic residues.

The protein belongs to the distal-less homeobox family. Interacts (via homeobox DNA-binding domain) with POU4F2; this interaction enhances retinal ganglion cell (RGC) differentiation. In terms of processing, phosphorylated by serine/threonine kinases. Expressed only in neural and other ectodermal structures of the head: the brain, the vomeronasal organ, and the preameloblasts of the teeth. Primarily expressed in the germinal cells of the ventral forebrain in the midgestational embryo, and in both dorsal and ventral ventricular zones in late embryogenesis and early postnatal life. Expressed in the inner nuclear layer of the retina.

Its subcellular location is the nucleus. Functionally, acts as a transcriptional activator. Activates transcription of CGA/alpha-GSU, via binding to the downstream activin regulatory element (DARE) in the gene promoter. Plays a role in terminal differentiation of interneurons, such as amacrine and bipolar cells in the developing retina. Likely to play a regulatory role in the development of the ventral forebrain. May play a role in craniofacial patterning and morphogenesis. The protein is Homeobox protein DLX-2 (Dlx2) of Mus musculus (Mouse).